We begin with the raw amino-acid sequence, 257 residues long: Snake venom serine protease CL5 (257 aa).

The first 18 residues, 1–18 (MVLIRVLANLLILQLSYA), serve as a signal peptide directing secretion. Residues 19–24 (QRSSEL) constitute a propeptide that is removed on maturation. The region spanning 25-248 (VIGGDECNIN…HLDWIQSIIA (224 aa)) is the Peptidase S1 domain. 5 disulfide bridges follow: C31-C162, C49-C65, C141-C209, C173-C188, and C199-C224. H64 acts as the Charge relay system in catalysis. N78 and N102 each carry an N-linked (GlcNAc...) asparagine glycan. D109 functions as the Charge relay system in the catalytic mechanism. 2 N-linked (GlcNAc...) asparagine glycosylation sites follow: N153 and N169. Catalysis depends on S203, which acts as the Charge relay system. An N-linked (GlcNAc...) asparagine glycan is attached at N250.

Belongs to the peptidase S1 family. Snake venom subfamily. In terms of assembly, monomer. As to expression, expressed by the venom gland.

Its subcellular location is the secreted. Snake venom serine protease that may act in the hemostasis system of the prey. This is Snake venom serine protease CL5 from Trimeresurus stejnegeri (Chinese green tree viper).